The following is a 295-amino-acid chain: Serpentine receptor class gamma-53 (295 aa).

Transmembrane regions (helical) follow at residues 7 to 27 (IWLC…VLLS), 39 to 61 (VITM…RMVF), 121 to 141 (FYLL…QLLY), 173 to 193 (CFMS…LYQV), 211 to 230 (MSLI…AWQT), and 241 to 261 (IELL…ILLI).

This sequence belongs to the nematode receptor-like protein srg family.

The protein localises to the membrane. This chain is Serpentine receptor class gamma-53 (srg-53), found in Caenorhabditis elegans.